Consider the following 620-residue polypeptide: UDP-glucose:protein N-beta-glucosyltransferase (620 aa).

This sequence belongs to the glycosyltransferase 41 family. Requires Does not require a metal cofactor. as cofactor.

The protein resides in the cytoplasm. It catalyses the reaction L-asparaginyl-[protein] + UDP-alpha-D-glucose = N(4)-(beta-D-glucosyl)-L-asparaginyl-[protein] + UDP + H(+). It functions in the pathway protein modification; protein glycosylation. In terms of biological role, inverting glycosyltransferase that catalyzes the transfer of one glucose moiety from UDP-glucose to an asparagine residue in peptides and proteins containing the NX(S/T) motif, resulting in their modification with a beta-linked 1,N-glucose. Likely acts as a key component of a general protein glycosylation system. Also accepts UDP-galactose as a substrate donor, albeit with low efficiency. Cannot use UDP-GlcNAc or UDP-GalNAc as substrate donor. The protein is UDP-glucose:protein N-beta-glucosyltransferase of Actinobacillus pleuropneumoniae serotype 7 (strain AP76).